The following is a 235-amino-acid chain: Mediator of RNA polymerase II transcription subunit 7 (235 aa).

It belongs to the Mediator complex subunit 7 family. Component of the Mediator complex.

It localises to the nucleus. Functionally, component of the Mediator complex, a coactivator involved in the regulated transcription of nearly all RNA polymerase II-dependent genes. Mediator functions as a bridge to convey information from gene-specific regulatory proteins to the basal RNA polymerase II transcription machinery. Mediator is recruited to promoters by direct interactions with regulatory proteins and serves as a scaffold for the assembly of a functional preinitiation complex with RNA polymerase II and the general transcription factors. The sequence is that of Mediator of RNA polymerase II transcription subunit 7 (MED7) from Yarrowia lipolytica (strain CLIB 122 / E 150) (Yeast).